The chain runs to 343 residues: Isopentenyl-diphosphate delta-isomerase (343 aa).

9–10 (RK) is a substrate binding site. Residues S67, 68–70 (AMT), S98, and N127 each bind FMN. Position 98–100 (98–100 (SQR)) interacts with substrate. A substrate-binding site is contributed by Q162. E163 serves as a coordination point for Mg(2+). Residues K194, T224, 273–275 (GVR), and 294–295 (AA) contribute to the FMN site.

It belongs to the IPP isomerase type 2 family. Homooctamer. Dimer of tetramers. FMN is required as a cofactor. The cofactor is NADPH. Requires Mg(2+) as cofactor.

It is found in the cytoplasm. The catalysed reaction is isopentenyl diphosphate = dimethylallyl diphosphate. Its function is as follows. Involved in the biosynthesis of isoprenoids. Catalyzes the 1,3-allylic rearrangement of the homoallylic substrate isopentenyl (IPP) to its allylic isomer, dimethylallyl diphosphate (DMAPP). The protein is Isopentenyl-diphosphate delta-isomerase of Xanthobacter autotrophicus (strain ATCC BAA-1158 / Py2).